Here is a 138-residue protein sequence, read N- to C-terminus: Putative pre-16S rRNA nuclease (138 aa).

It belongs to the YqgF nuclease family.

The protein localises to the cytoplasm. Functionally, could be a nuclease involved in processing of the 5'-end of pre-16S rRNA. This chain is Putative pre-16S rRNA nuclease, found in Salmonella schwarzengrund (strain CVM19633).